A 496-amino-acid chain; its full sequence is MARTLQLSLTALLLLPMAIAMHSDCIFKKEQAMCLERIQRANDLMGLNESSPGCPGMWDNITCWKPAQIGEMVLVSCPEVFRIFNPDQVWMTETIGDSGFADSNSLEITDMGVVGRNCTEDGWSEPFPHYFDACGFDDYEPESGDQDYYYLSVKALYTVGYSTSLVTLTTAMVILCRFRKLHCTRNFIHMNLFVSFMLRAISVFIKDWILYAEQDSSHCFVSTVECKAVMVFFHYCVVSNYFWLFIEGLYLFTLLVETFFPERRYFYWYTIIGWGTPTVCVTVWAVLRLYFDDAGCWDMNDSTALWWVIKGPVVGSIMVNFVLFIGIIIILVQKLQSPDMGGNESSIYFSCVQKCYCKPQRAQQHSCKMSELSTITLRLARSTLLLIPLFGIHYTVFAFSPENVSKRERLVFELGLGSFQGFVVAVLYCFLNGEVQAEIKRKWRSWKVNRYFTMDFKHRHPSLASSGVNGGTQLSILSKSSSQLRMSSLPADNLAT.

A signal peptide spans 1–20 (MARTLQLSLTALLLLPMAIA). Topologically, residues 21–152 (MHSDCIFKKE…SGDQDYYYLS (132 aa)) are extracellular. 3 disulfide bridges follow: C34–C63, C54–C118, and C77–C134. N-linked (GlcNAc...) asparagine glycans are attached at residues N48, N60, and N117. The tract at residues 125-139 (EPFPHYFDACGFDDY) is important for ADCYAP1/PACAP ligand binding and specificity. The segment at 125-139 (EPFPHYFDACGFDDY) is important for ligand binding and specificity. A helical membrane pass occupies residues 153–177 (VKALYTVGYSTSLVTLTTAMVILCR). Residues 178-187 (FRKLHCTRNF) are Cytoplasmic-facing. A helical membrane pass occupies residues 188-208 (IHMNLFVSFMLRAISVFIKDW). Topologically, residues 209 to 223 (ILYAEQDSSHCFVST) are extracellular. A helical membrane pass occupies residues 224–249 (VECKAVMVFFHYCVVSNYFWLFIEGL). A disulfide bridge links C226 with C296. Residues 250–267 (YLFTLLVETFFPERRYFY) are Cytoplasmic-facing. Residues 268-290 (WYTIIGWGTPTVCVTVWAVLRLY) form a helical membrane-spanning segment. The Extracellular segment spans residues 291-302 (FDDAGCWDMNDS). Residues 303 to 329 (TALWWVIKGPVVGSIMVNFVLFIGIII) traverse the membrane as a helical segment. Residues 330–347 (ILVQKLQSPDMGGNESSI) lie on the Cytoplasmic side of the membrane. Residues 348 to 402 (YFSCVQKCYCKPQRAQQHSCKMSELSTITLRLARSTLLLIPLFGIHYTVFAFSPE) traverse the membrane as a helical segment. The Extracellular portion of the chain corresponds to 403–407 (NVSKR). The helical transmembrane segment at 408–431 (ERLVFELGLGSFQGFVVAVLYCFL) threads the bilayer. The Cytoplasmic portion of the chain corresponds to 432–496 (NGEVQAEIKR…SSLPADNLAT (65 aa)). S462 and S475 each carry phosphoserine.

Belongs to the G-protein coupled receptor 2 family. In terms of assembly, interacts with maxadilan, a vasodilator peptide from Lutzomyia longipalpis saliva; the interaction results in ADCYAP1R1 activation.

The protein resides in the cell membrane. Functionally, g protein-coupled receptor activated by the neuropeptide pituitary adenylate cyclase-activating polypeptide (ADCYAP1/PACAP). Binds both PACAP27 and PACAP38 bioactive peptides. Ligand binding causes a conformation change that triggers signaling via guanine nucleotide-binding proteins (G proteins) and modulates the activity of downstream effectors. Activates cAMP-dependent pathway. May regulate the release of adrenocorticotropin, luteinizing hormone, growth hormone, prolactin, epinephrine, and catecholamine. May play a role in spermatogenesis and sperm motility. Causes smooth muscle relaxation and secretion in the gastrointestinal tract. The sequence is that of Pituitary adenylate cyclase-activating polypeptide type I receptor from Mus musculus (Mouse).